Consider the following 326-residue polypeptide: CRISPR-associated endonuclease Cas1 (326 aa).

Mn(2+) is bound by residues E191, H255, and D269.

The protein belongs to the CRISPR-associated endonuclease Cas1 family. As to quaternary structure, homodimer. Interacts with Cas3, in the absence of crRNA. It depends on Mg(2+) as a cofactor. The cofactor is Mn(2+).

In terms of biological role, CRISPR (clustered regularly interspaced short palindromic repeat), is an adaptive immune system that provides protection against mobile genetic elements (viruses, transposable elements and conjugative plasmids). CRISPR clusters contain sequences complementary to antecedent mobile elements and target invading nucleic acids. CRISPR clusters are transcribed and processed into CRISPR RNA (crRNA). Acts as a dsDNA endonuclease. Involved in the integration of spacer DNA into the CRISPR cassette. This Pectobacterium atrosepticum (strain SCRI 1043 / ATCC BAA-672) (Erwinia carotovora subsp. atroseptica) protein is CRISPR-associated endonuclease Cas1.